Here is a 559-residue protein sequence, read N- to C-terminus: Extracellular matrix protein 1 (559 aa).

The signal sequence occupies residues 1–19 (MGTVSRAALILACLALASA). 2 tandem repeats follow at residues 170 to 298 (HCQQ…RPDY) and 302 to 424 (PCPV…YPNY). The interval 170–424 (HCQQGRRGVW…FAHLAPYPNY (255 aa)) is 2 X approximate repeats. Asn373 carries N-linked (GlcNAc...) asparagine glycosylation. Asn463 and Asn535 each carry an N-linked (GlcNAc...) (high mannose) asparagine glycan. The tract at residues 535–559 (NATGLGEQGPTRGTDANPAPGSKEE) is disordered. Residue Ser556 is modified to Phosphoserine.

In terms of assembly, interacts (via C-terminus) with HSPG2 (via C-terminus). Interacts with EFEMP1/FBLN3 and LAMB3. Interacts with MMP9. As to expression, expressed in the surrounding connective tissues of developing long bones, but not in the cartilage. The long isoform is expressed in a number of tissues including liver, heart and lungs. The short isoform is expressed in skin and cartilage-containing tissues such as tail and front paw. No expression is found in brain.

The protein localises to the secreted. It localises to the extracellular space. Its subcellular location is the extracellular matrix. Involved in endochondral bone formation as negative regulator of bone mineralization. Stimulates the proliferation of endothelial cells and promotes angiogenesis. Inhibits MMP9 proteolytic activity. In Mus musculus (Mouse), this protein is Extracellular matrix protein 1 (Ecm1).